A 969-amino-acid chain; its full sequence is MADDATTARDYRETVFLPDTPFPMRAGLPKKEPEILEGWAALSEKGLYGAVRQKRQAAGAPLFVFHDGPPYANGAIHIGHALNKILKDFVVRSRFALGYDVDYVPGWDCHGLPIEWKIEEQFRAKGRRKDEVPAEEFRRECRAYAGGWIEAQKTEFQRLGVLGDWWNRYATMDFTSEAKIVEEFHKFLATGQLYRGSKPVMWSPVERTALADAEIEYHDHVSPTIWVKFPVVQGSDAAVGAKLVIWTTTPWTIPANRAVSYNPDIPYSVFEVTALEEGLEFEPWAKPGDRLIIADKLAEDVFKAAKVASWKTVEAVDCEGMVLAHPLADLDSHYGYAVPMLAGDHVTDDAGTGFVHTAPGHGADDYQVWLAHGHREIPDTVDPDGAYYPHVALFAGLKVLETEGKKVGKFGPANGAVMEKLIEAGNLLARGRVEHSYPHSWRSKAPVIFRNTPQWFIRMDHAVDSLDGKTLREVAVQAIADTAFYPDGGRNRIGAMVETRPDWLISRQRNWGTPLAMFVDKHTGHPLNDPEVNARILAAIREGGADAWFTRPDADFLGAHDPAQYEKITDILDVWFDSGCTHAFTIEGRADSAWPADLYLEGSDQHRGWFQSSLLEGCGTRGRAPYKAVVTHGFTMDENGEKMSKSRGNTIEPQTITKESGAEILRLWTAMVDYQEDQRIGKTILATTTDAYRKLRNTMRYLLGALAGFDEEERVTDYDQFPALEKYILHRLWELDGQVREAYQSYRFSDVIRPLIEFCQGDLSALYFDVRRDSLYCDRPDALKRRAYRTALDYVFDRLTIWLAPLASFTMEEAWTTRFPEAGPVAYRVMPERVDAWRNDAEAARWAKVEKVTSVVTGALEVERREKRIGSALEAAPVVHFADEDLLAAFEGLDAGEVFRTSSATLVAGDAGAFRVDEVKGVSVDPNKAEGKKCARSWRILPEVGTDPRYPELSLRDADAVAYWDAGRG.

Residues 70 to 80 (PYANGAIHIGH) carry the 'HIGH' region motif. Glutamate 601 contributes to the L-isoleucyl-5'-AMP binding site. A 'KMSKS' region motif is present at residues 642-646 (KMSKS). An ATP-binding site is contributed by lysine 645.

The protein belongs to the class-I aminoacyl-tRNA synthetase family. IleS type 1 subfamily. In terms of assembly, monomer.

Its subcellular location is the cytoplasm. The catalysed reaction is tRNA(Ile) + L-isoleucine + ATP = L-isoleucyl-tRNA(Ile) + AMP + diphosphate. Its function is as follows. Catalyzes the attachment of isoleucine to tRNA(Ile). As IleRS can inadvertently accommodate and process structurally similar amino acids such as valine, to avoid such errors it has two additional distinct tRNA(Ile)-dependent editing activities. One activity is designated as 'pretransfer' editing and involves the hydrolysis of activated Val-AMP. The other activity is designated 'posttransfer' editing and involves deacylation of mischarged Val-tRNA(Ile). The sequence is that of Isoleucine--tRNA ligase from Caulobacter vibrioides (strain ATCC 19089 / CIP 103742 / CB 15) (Caulobacter crescentus).